Consider the following 432-residue polypeptide: MTNVVVVGSQWGDEGKGKIVDWLSERADIVVRFQGGHNAGHTLVIDGVSYKLSLLPSGVVRPGKLAVIGNGVVIDPHALIAEIDKLGKQGVQITPDNLRIADNATLILSLHRELDGFREDAASNSGTKIGTTRRGIGPAYEDKVGRRAIRVMDLADLDTLPAKVDRLLTHHNALRRGLGEAEISHQAIMDELSSVAARVLPFMDTVWLLLDKERRKGARILFEGAQGTLLDIDHGTYPFVTSSNTVAGQAAAGSGMGPGALGYILGITKAYTTRVGEGPFPTELHDEVGQFLGERGHEFGTVTGRKRRCGWFDAALVRQSVAANGITGIALTKLDVLDGLDELKICVGYTLDGQEIDHLPASQAQQASVKPVYITLEGWKESTVGARSWADLPAQAIKYVRQVEELIGAPVALLSTSPERDDTILVTDPFED.

GTP-binding positions include 12–18 (GDEGKGK) and 40–42 (GHT). Catalysis depends on Asp-13, which acts as the Proton acceptor. The Mg(2+) site is built by Asp-13 and Gly-40. IMP-binding positions include 13 to 16 (DEGK), 38 to 41 (NAGH), Thr-132, Arg-146, Gln-226, Thr-241, and Arg-305. His-41 acts as the Proton donor in catalysis. 301 to 307 (TVTGRKR) serves as a coordination point for substrate. GTP-binding positions include Arg-307, 333–335 (KLD), and 415–417 (STS).

It belongs to the adenylosuccinate synthetase family. Homodimer. Requires Mg(2+) as cofactor.

The protein localises to the cytoplasm. The catalysed reaction is IMP + L-aspartate + GTP = N(6)-(1,2-dicarboxyethyl)-AMP + GDP + phosphate + 2 H(+). It functions in the pathway purine metabolism; AMP biosynthesis via de novo pathway; AMP from IMP: step 1/2. Functionally, plays an important role in the de novo pathway of purine nucleotide biosynthesis. Catalyzes the first committed step in the biosynthesis of AMP from IMP. The protein is Adenylosuccinate synthetase of Sinorhizobium fredii (strain NBRC 101917 / NGR234).